Here is a 346-residue protein sequence, read N- to C-terminus: Biotin synthase (346 aa).

Residues 38-256 enclose the Radical SAM core domain; sequence RQVQVSTLLS…IAVARIMMPT (219 aa). Residues Cys53, Cys57, and Cys60 each coordinate [4Fe-4S] cluster. Cys97, Cys128, Cys188, and Arg260 together coordinate [2Fe-2S] cluster.

Belongs to the radical SAM superfamily. Biotin synthase family. In terms of assembly, homodimer. [4Fe-4S] cluster is required as a cofactor. Requires [2Fe-2S] cluster as cofactor.

It catalyses the reaction (4R,5S)-dethiobiotin + (sulfur carrier)-SH + 2 reduced [2Fe-2S]-[ferredoxin] + 2 S-adenosyl-L-methionine = (sulfur carrier)-H + biotin + 2 5'-deoxyadenosine + 2 L-methionine + 2 oxidized [2Fe-2S]-[ferredoxin]. Its pathway is cofactor biosynthesis; biotin biosynthesis; biotin from 7,8-diaminononanoate: step 2/2. Catalyzes the conversion of dethiobiotin (DTB) to biotin by the insertion of a sulfur atom into dethiobiotin via a radical-based mechanism. In Escherichia coli O6:K15:H31 (strain 536 / UPEC), this protein is Biotin synthase.